The primary structure comprises 231 residues: 5'-methylthioadenosine/S-adenosylhomocysteine nucleosidase (231 aa).

Catalysis depends on glutamate 12, which acts as the Proton acceptor. Substrate is bound by residues glycine 78, valine 153, and 174 to 175 (ME). Aspartate 198 (proton donor) is an active-site residue.

The protein belongs to the PNP/UDP phosphorylase family. MtnN subfamily.

It catalyses the reaction S-adenosyl-L-homocysteine + H2O = S-(5-deoxy-D-ribos-5-yl)-L-homocysteine + adenine. It carries out the reaction S-methyl-5'-thioadenosine + H2O = 5-(methylsulfanyl)-D-ribose + adenine. The catalysed reaction is 5'-deoxyadenosine + H2O = 5-deoxy-D-ribose + adenine. It functions in the pathway amino-acid biosynthesis; L-methionine biosynthesis via salvage pathway; S-methyl-5-thio-alpha-D-ribose 1-phosphate from S-methyl-5'-thioadenosine (hydrolase route): step 1/2. Catalyzes the irreversible cleavage of the glycosidic bond in both 5'-methylthioadenosine (MTA) and S-adenosylhomocysteine (SAH/AdoHcy) to adenine and the corresponding thioribose, 5'-methylthioribose and S-ribosylhomocysteine, respectively. Also cleaves 5'-deoxyadenosine, a toxic by-product of radical S-adenosylmethionine (SAM) enzymes, into 5-deoxyribose and adenine. The polypeptide is 5'-methylthioadenosine/S-adenosylhomocysteine nucleosidase (Vibrio vulnificus (strain CMCP6)).